Reading from the N-terminus, the 62-residue chain is uncharacterized protein (62 aa).

It is found in the plastid. The protein localises to the chloroplast. This is an uncharacterized protein from Chlamydomonas reinhardtii (Chlamydomonas smithii).